The following is a 485-amino-acid chain: Trigger factor (485 aa).

Residues 171–256 enclose the PPIase FKBP-type domain; sequence GDRVVIDFVG…VKAVKAPGEA (86 aa). Residues 443–485 are disordered; it reads FADDEDEAAEAAAPASEAGASKGVISEGVISEGSAPSHETGAA. A compositionally biased stretch (low complexity) spans 452 to 462; the sequence is EAAAPASEAGA.

Belongs to the FKBP-type PPIase family. Tig subfamily.

It localises to the cytoplasm. The catalysed reaction is [protein]-peptidylproline (omega=180) = [protein]-peptidylproline (omega=0). Functionally, involved in protein export. Acts as a chaperone by maintaining the newly synthesized protein in an open conformation. Functions as a peptidyl-prolyl cis-trans isomerase. The chain is Trigger factor from Methylobacterium sp. (strain 4-46).